The chain runs to 190 residues: Holliday junction branch migration complex subunit RuvA (190 aa).

Residues 1 to 64 (MIGKLTGTLL…EDAQLLYGFG (64 aa)) form a domain I region. Positions 65–143 (THSERQAFRE…ADTGAQSLFV (79 aa)) are domain II. Residues 144–148 (NNDQN) are flexible linker. Residues 148 to 190 (NDIVQALMALGYSDKDAAAALKKLPPDVGVTEGIKLALKALAK) are domain III.

It belongs to the RuvA family. Homotetramer. Forms an RuvA(8)-RuvB(12)-Holliday junction (HJ) complex. HJ DNA is sandwiched between 2 RuvA tetramers; dsDNA enters through RuvA and exits via RuvB. An RuvB hexamer assembles on each DNA strand where it exits the tetramer. Each RuvB hexamer is contacted by two RuvA subunits (via domain III) on 2 adjacent RuvB subunits; this complex drives branch migration. In the full resolvosome a probable DNA-RuvA(4)-RuvB(12)-RuvC(2) complex forms which resolves the HJ.

The protein localises to the cytoplasm. In terms of biological role, the RuvA-RuvB-RuvC complex processes Holliday junction (HJ) DNA during genetic recombination and DNA repair, while the RuvA-RuvB complex plays an important role in the rescue of blocked DNA replication forks via replication fork reversal (RFR). RuvA specifically binds to HJ cruciform DNA, conferring on it an open structure. The RuvB hexamer acts as an ATP-dependent pump, pulling dsDNA into and through the RuvAB complex. HJ branch migration allows RuvC to scan DNA until it finds its consensus sequence, where it cleaves and resolves the cruciform DNA. This is Holliday junction branch migration complex subunit RuvA from Delftia acidovorans (strain DSM 14801 / SPH-1).